Consider the following 255-residue polypeptide: 5'-nucleotidase SurE (255 aa).

The a divalent metal cation site is built by aspartate 16, aspartate 17, serine 47, and asparagine 100.

It belongs to the SurE nucleotidase family. The cofactor is a divalent metal cation.

Its subcellular location is the cytoplasm. It catalyses the reaction a ribonucleoside 5'-phosphate + H2O = a ribonucleoside + phosphate. Its function is as follows. Nucleotidase that shows phosphatase activity on nucleoside 5'-monophosphates. The sequence is that of 5'-nucleotidase SurE from Vibrio vulnificus (strain YJ016).